A 351-amino-acid polypeptide reads, in one-letter code: Photosystem II D2 protein (351 aa).

A helical membrane pass occupies residues 39-59 (CSYLALGGWLTGTTFVTSWYT). His116 provides a ligand contact to chlorophyll a. Residues 123–139 (GFCLRQFEIARLVGIRP) traverse the membrane as a helical segment. 2 residues coordinate pheophytin a: Gln128 and Asn141. The chain crosses the membrane as a helical span at residues 151-164 (VFVSVFLMYPLGQA). His196 is a binding site for chlorophyll a. A helical transmembrane segment spans residues 206–226 (GALLCAIHGATVQNTLFEDGD). A plastoquinone-binding residues include His213 and Phe260. His213 is a Fe cation binding site. His267 provides a ligand contact to Fe cation. A helical transmembrane segment spans residues 277–293 (GLWTSAFGIVGLALNLR).

Belongs to the reaction center PufL/M/PsbA/D family. PSII is composed of 1 copy each of membrane proteins PsbA, PsbB, PsbC, PsbD, PsbE, PsbF, PsbH, PsbI, PsbJ, PsbK, PsbL, PsbM, PsbT, PsbX, PsbY, PsbZ, Psb30/Ycf12, at least 3 peripheral proteins of the oxygen-evolving complex and a large number of cofactors. It forms dimeric complexes. Requires The D1/D2 heterodimer binds P680, chlorophylls that are the primary electron donor of PSII, and subsequent electron acceptors. It shares a non-heme iron and each subunit binds pheophytin, quinone, additional chlorophylls, carotenoids and lipids. There is also a Cl(-1) ion associated with D1 and D2, which is required for oxygen evolution. The PSII complex binds additional chlorophylls, carotenoids and specific lipids. as cofactor.

The protein localises to the plastid. The protein resides in the chloroplast thylakoid membrane. The catalysed reaction is 2 a plastoquinone + 4 hnu + 2 H2O = 2 a plastoquinol + O2. Photosystem II (PSII) is a light-driven water:plastoquinone oxidoreductase that uses light energy to abstract electrons from H(2)O, generating O(2) and a proton gradient subsequently used for ATP formation. It consists of a core antenna complex that captures photons, and an electron transfer chain that converts photonic excitation into a charge separation. The D1/D2 (PsbA/PsbD) reaction center heterodimer binds P680, the primary electron donor of PSII as well as several subsequent electron acceptors. D2 is needed for assembly of a stable PSII complex. The sequence is that of Photosystem II D2 protein from Gracilaria tenuistipitata var. liui (Red alga).